Reading from the N-terminus, the 178-residue chain is Protein GrpE (178 aa).

Composition is skewed to basic and acidic residues over residues Met-1 to Ala-19 and Ser-30 to Arg-42. The segment at Met-1–Arg-42 is disordered.

It belongs to the GrpE family. In terms of assembly, homodimer.

Its subcellular location is the cytoplasm. In terms of biological role, participates actively in the response to hyperosmotic and heat shock by preventing the aggregation of stress-denatured proteins, in association with DnaK and GrpE. It is the nucleotide exchange factor for DnaK and may function as a thermosensor. Unfolded proteins bind initially to DnaJ; upon interaction with the DnaJ-bound protein, DnaK hydrolyzes its bound ATP, resulting in the formation of a stable complex. GrpE releases ADP from DnaK; ATP binding to DnaK triggers the release of the substrate protein, thus completing the reaction cycle. Several rounds of ATP-dependent interactions between DnaJ, DnaK and GrpE are required for fully efficient folding. In Streptococcus sanguinis (strain SK36), this protein is Protein GrpE.